The chain runs to 387 residues: MDRVGVLLLNLGGPEQLEDVRPFLFNLFSDPEIIRLPFPWLQKPLAWLISSLRSEKSQENYKQIGGGSPLRKITEAQAEALEQRLAEIGHTAQIYIGMRYWHPFTEEAIARIKRDRLKNLVILPLYPQFSISTSGSSFRVLEEMWNADPQLKAINYTLIPSWYDDPRYLAAMADLIAQELDKCEEPNRVHIFFSAHGVPQSYVDEAGDPYQAEIEACTRLIMQTLNRPNDYTLAYQSRVGPVEWLKPYTEDALKELGEQGVQDLLVVPISFVSEHIETLQEIDIEYREVAEEAGIENFYRVPALNTHPVFIDSLAQLVTKSLQEPPCTFNQVIHPKENMKMYPQERWQWGLTTAAEVWNGRLAMVGFIALLIELISGHGPLHFVGLL.

2 residues coordinate Fe cation: His-196 and Glu-277.

This sequence belongs to the ferrochelatase family.

The protein resides in the cytoplasm. The enzyme catalyses heme b + 2 H(+) = protoporphyrin IX + Fe(2+). It functions in the pathway porphyrin-containing compound metabolism; protoheme biosynthesis; protoheme from protoporphyrin-IX: step 1/1. Functionally, catalyzes the ferrous insertion into protoporphyrin IX. The chain is Ferrochelatase from Rippkaea orientalis (strain PCC 8801 / RF-1) (Cyanothece sp. (strain PCC 8801)).